A 546-amino-acid polypeptide reads, in one-letter code: Chaperonin GroEL (546 aa).

Residues 30-33, Lys-51, 87-91, Gly-415, 479-481, and Asp-495 each bind ATP; these read TLGP, DGTTT, and NAA. The tract at residues 526–546 is disordered; the sequence is KKDEPAMPAGGGMGGMGGMDF. A compositionally biased stretch (gly residues) spans 534–546; it reads AGGGMGGMGGMDF.

This sequence belongs to the chaperonin (HSP60) family. As to quaternary structure, forms a cylinder of 14 subunits composed of two heptameric rings stacked back-to-back. Interacts with the co-chaperonin GroES.

It localises to the cytoplasm. The enzyme catalyses ATP + H2O + a folded polypeptide = ADP + phosphate + an unfolded polypeptide.. In terms of biological role, together with its co-chaperonin GroES, plays an essential role in assisting protein folding. The GroEL-GroES system forms a nano-cage that allows encapsulation of the non-native substrate proteins and provides a physical environment optimized to promote and accelerate protein folding. The chain is Chaperonin GroEL from Xanthomonas campestris pv. campestris (strain 8004).